A 120-amino-acid chain; its full sequence is Membrane-anchored ubiquitin-fold protein 4 (120 aa).

The Ubiquitin-like domain occupies 7–73; that stretch reads VELKFRLYDG…LENGKTVAQC (67 aa). The S-palmitoyl cysteine moiety is linked to residue C115. Position 117 is a cysteine methyl ester (C117). A lipid anchor (S-farnesyl cysteine) is attached at C117. Residues 118 to 120 constitute a propeptide, removed in mature form; it reads TIM.

In terms of tissue distribution, ubiquitous.

It localises to the cell membrane. In terms of biological role, may serve as docking site to facilitate the association of other proteins to the plasma membrane. This Arabidopsis thaliana (Mouse-ear cress) protein is Membrane-anchored ubiquitin-fold protein 4 (MUB4).